Here is a 193-residue protein sequence, read N- to C-terminus: ATP-dependent Clp protease proteolytic subunit 2 (193 aa).

S98 functions as the Nucleophile in the catalytic mechanism. H123 is a catalytic residue.

It belongs to the peptidase S14 family. As to quaternary structure, fourteen ClpP subunits assemble into 2 heptameric rings which stack back to back to give a disk-like structure with a central cavity, resembling the structure of eukaryotic proteasomes.

The protein resides in the cytoplasm. The catalysed reaction is Hydrolysis of proteins to small peptides in the presence of ATP and magnesium. alpha-casein is the usual test substrate. In the absence of ATP, only oligopeptides shorter than five residues are hydrolyzed (such as succinyl-Leu-Tyr-|-NHMec, and Leu-Tyr-Leu-|-Tyr-Trp, in which cleavage of the -Tyr-|-Leu- and -Tyr-|-Trp bonds also occurs).. In terms of biological role, cleaves peptides in various proteins in a process that requires ATP hydrolysis. Has a chymotrypsin-like activity. Plays a major role in the degradation of misfolded proteins. This Bacillus cereus (strain ATCC 14579 / DSM 31 / CCUG 7414 / JCM 2152 / NBRC 15305 / NCIMB 9373 / NCTC 2599 / NRRL B-3711) protein is ATP-dependent Clp protease proteolytic subunit 2.